Consider the following 274-residue polypeptide: Penicillin-insensitive murein endopeptidase (274 aa).

The N-terminal stretch at 1-19 (MKNTVIALLALLASAGSLA) is a signal peptide. Cystine bridges form between C44/C265, C187/C235, and C216/C223. H110, H113, D120, D147, H150, and H211 together coordinate Zn(2+). The disordered stretch occupies residues 224 to 263 (EDQAPPPPGDGCGAELQSWFEPPKPGSTPPVKKTPPPLPP). A compositionally biased stretch (pro residues) spans 245–263 (PPKPGSTPPVKKTPPPLPP).

Belongs to the peptidase M74 family. Dimer. The cofactor is Zn(2+).

It is found in the periplasm. Its function is as follows. Murein endopeptidase that cleaves the D-alanyl-meso-2,6-diamino-pimelyl amide bond that connects peptidoglycan strands. Likely plays a role in the removal of murein from the sacculus. This chain is Penicillin-insensitive murein endopeptidase, found in Klebsiella pneumoniae subsp. pneumoniae (strain ATCC 700721 / MGH 78578).